A 168-amino-acid polypeptide reads, in one-letter code: Cyanate hydratase (168 aa).

Active-site residues include R94, E97, and S120.

It belongs to the cyanase family.

The enzyme catalyses cyanate + hydrogencarbonate + 3 H(+) = NH4(+) + 2 CO2. Functionally, catalyzes the reaction of cyanate with bicarbonate to produce ammonia and carbon dioxide. The sequence is that of Cyanate hydratase from Oryza sativa subsp. indica (Rice).